We begin with the raw amino-acid sequence, 72 residues long: ATP synthase subunit c (72 aa).

A run of 2 helical transmembrane segments spans residues 1–21 (MSLG…GAGI) and 48–68 (MFIG…FSFI).

Belongs to the ATPase C chain family. In terms of assembly, F-type ATPases have 2 components, F(1) - the catalytic core - and F(0) - the membrane proton channel. F(1) has five subunits: alpha(3), beta(3), gamma(1), delta(1), epsilon(1). F(0) has three main subunits: a(1), b(2) and c(10-14). The alpha and beta chains form an alternating ring which encloses part of the gamma chain. F(1) is attached to F(0) by a central stalk formed by the gamma and epsilon chains, while a peripheral stalk is formed by the delta and b chains.

Its subcellular location is the cell membrane. Its function is as follows. F(1)F(0) ATP synthase produces ATP from ADP in the presence of a proton or sodium gradient. F-type ATPases consist of two structural domains, F(1) containing the extramembraneous catalytic core and F(0) containing the membrane proton channel, linked together by a central stalk and a peripheral stalk. During catalysis, ATP synthesis in the catalytic domain of F(1) is coupled via a rotary mechanism of the central stalk subunits to proton translocation. Functionally, key component of the F(0) channel; it plays a direct role in translocation across the membrane. A homomeric c-ring of between 10-14 subunits forms the central stalk rotor element with the F(1) delta and epsilon subunits. This is ATP synthase subunit c from Geobacillus kaustophilus (strain HTA426).